The primary structure comprises 251 residues: Probable transcriptional regulatory protein TGRD_462 (251 aa).

Belongs to the TACO1 family.

Its subcellular location is the cytoplasm. This Endomicrobium trichonymphae protein is Probable transcriptional regulatory protein TGRD_462.